The chain runs to 83 residues: Three-finger toxin MALT0058C (83 aa).

Positions 1 to 21 (MKTLLLTLVVVTIVCLDFGHT) are cleaved as a signal peptide. 4 cysteine pairs are disulfide-bonded: C24-C45, C38-C62, C64-C75, and C76-C81.

The protein belongs to the three-finger toxin family. Short-chain subfamily. Type I alpha-neurotoxin sub-subfamily. Expressed by the venom gland.

The protein resides in the secreted. Its function is as follows. Binds to muscle nicotinic acetylcholine receptor (nAChR) and inhibits acetylcholine from binding to the receptor, thereby impairing neuromuscular transmission. This is Three-finger toxin MALT0058C from Micrurus altirostris (Uruguayan coral snake).